The sequence spans 245 residues: 1-(5-phosphoribosyl)-5-[(5-phosphoribosylamino)methylideneamino] imidazole-4-carboxamide isomerase (245 aa).

Residue Asp-8 is the Proton acceptor of the active site. Catalysis depends on Asp-131, which acts as the Proton donor.

Belongs to the HisA/HisF family.

The protein localises to the cytoplasm. It catalyses the reaction 1-(5-phospho-beta-D-ribosyl)-5-[(5-phospho-beta-D-ribosylamino)methylideneamino]imidazole-4-carboxamide = 5-[(5-phospho-1-deoxy-D-ribulos-1-ylimino)methylamino]-1-(5-phospho-beta-D-ribosyl)imidazole-4-carboxamide. It participates in amino-acid biosynthesis; L-histidine biosynthesis; L-histidine from 5-phospho-alpha-D-ribose 1-diphosphate: step 4/9. The chain is 1-(5-phosphoribosyl)-5-[(5-phosphoribosylamino)methylideneamino] imidazole-4-carboxamide isomerase from Neisseria gonorrhoeae (strain NCCP11945).